The primary structure comprises 442 residues: tRNA-2-methylthio-N(6)-dimethylallyladenosine synthase (442 aa).

An MTTase N-terminal domain is found at 5 to 122 (KKVFIKTLGC…LPEMIKQKQK (118 aa)). Positions 14, 51, 85, 159, 163, and 166 each coordinate [4Fe-4S] cluster. The region spanning 145 to 378 (KAEGAKAYVS…DLLNSNAQII (234 aa)) is the Radical SAM core domain. Positions 380–442 (RQMVGTNQRI…LPNSLRGELI (63 aa)) constitute a TRAM domain.

The protein belongs to the methylthiotransferase family. MiaB subfamily. In terms of assembly, monomer. Requires [4Fe-4S] cluster as cofactor.

The protein resides in the cytoplasm. It catalyses the reaction N(6)-dimethylallyladenosine(37) in tRNA + (sulfur carrier)-SH + AH2 + 2 S-adenosyl-L-methionine = 2-methylsulfanyl-N(6)-dimethylallyladenosine(37) in tRNA + (sulfur carrier)-H + 5'-deoxyadenosine + L-methionine + A + S-adenosyl-L-homocysteine + 2 H(+). Its function is as follows. Catalyzes the methylthiolation of N6-(dimethylallyl)adenosine (i(6)A), leading to the formation of 2-methylthio-N6-(dimethylallyl)adenosine (ms(2)i(6)A) at position 37 in tRNAs that read codons beginning with uridine. In Francisella tularensis subsp. holarctica (strain FTNF002-00 / FTA), this protein is tRNA-2-methylthio-N(6)-dimethylallyladenosine synthase.